The chain runs to 335 residues: Adenosine deaminase (335 aa).

Zn(2+) is bound by residues His12 and His14. The substrate site is built by His14 and Asp16. Zn(2+) is bound at residue His197. Glu200 acts as the Proton donor in catalysis. A Zn(2+)-binding site is contributed by Asp278.

Belongs to the metallo-dependent hydrolases superfamily. Adenosine and AMP deaminases family. Adenosine deaminase subfamily. Zn(2+) serves as cofactor.

The catalysed reaction is adenosine + H2O + H(+) = inosine + NH4(+). It carries out the reaction 2'-deoxyadenosine + H2O + H(+) = 2'-deoxyinosine + NH4(+). Catalyzes the hydrolytic deamination of adenosine and 2-deoxyadenosine. The chain is Adenosine deaminase from Clostridium botulinum (strain Okra / Type B1).